The following is a 681-amino-acid chain: MESTVATITSTLAAVTASAPPKYDNLWMLILGFIIAFVLAFSVGANDVANSFGTAVGSGVVTLKQACILASIFETVGSALLGAKVSETIRNGLIDVELYNETQDLLMAGSVSAMFGSAVWQLVASFLKLPISGTHCIVGATIGFSLVANGQKGVKWSELIKIVMSWFVSPLLSGIMSGILFFLVRAFILRKADPVPNGLRALPIFYACTIGINLFSIMYTGAPLLGFDKLPLWGTILISVGCAVFCALIVWFFVCPRMKRKIEREVKSSPSESPLMEKKSNLKEDHEETKMAPGDVEHRNPVSEVVCATGPLRAVVEERTVSFKLGDLEEAPERERLPMDLKEETSIDSTINGAVQLPNGNLVQFSQTVSNQINSSGHYQYHTVHKDSGLYKELLHKLHLAKVGDCMGDSGDKPLRRNNSYTSYTMAICGMPLDSFRAKEGEQKGDEMETLTWPNADTKKRIRMDSYTSYCNAVSDLHSESEMDMSVKAEMGLGDRKGSSGSLEEWYDQDKPEVSLLFQFLQILTACFGSFAHGGNDVSNAIGPLVALYLVYKQEASTKAATPIWLLLYGGVGICMGLWVWGRRVIQTMGKDLTPITPSSGFSIELASALTVVIASNIGLPISTTHCKVGSVVSVGWLRSKKAVDWRLFRNIFMAWFVTVPISGVISAAIMAVFKYIILPV.

6 helical membrane passes run 25–45 (NLWM…SVGA), 66–86 (ACIL…AKVS), 106–126 (LMAG…VASF), 162–182 (IVMS…ILFF), 201–221 (ALPI…MYTG), and 234–254 (GTIL…WFFV). Positions 266–295 (VKSSPSESPLMEKKSNLKEDHEETKMAPGD) are disordered. Residues serine 269 and serine 273 each carry the phosphoserine modification. A compositionally biased stretch (basic and acidic residues) spans 275–295 (LMEKKSNLKEDHEETKMAPGD). A helical membrane pass occupies residues 514 to 534 (VSLLFQFLQILTACFGSFAHG). The tract at residues 553-560 (KQEASTKA) is a. 3 consecutive transmembrane segments (helical) span residues 561–581 (ATPI…LWVW), 602–622 (FSIE…GLPI), and 652–672 (IFMA…AIMA).

Belongs to the inorganic phosphate transporter (PiT) (TC 2.A.20) family. In terms of tissue distribution, ubiquitously expressed.

The protein localises to the cell membrane. The enzyme catalyses 2 Na(+)(out) + phosphate(out) = 2 Na(+)(in) + phosphate(in). Its function is as follows. Sodium-phosphate symporter which preferentially transports the monovalent form of phosphate with a stoichiometry of two sodium ions per phosphate ion. May play a role in extracellular matrix and cartilage calcification as well as in vascular calcification. Essential for cell proliferation but this function is independent of its phosphate transporter activity. In terms of biological role, (Microbial infection) May function as a retroviral receptor but do not confer infection susceptibility to Gibbon Ape Leukemia Virus (GaLV), Simian sarcoma-associated virus (SSAV) and Feline leukemia virus subgroup B (FeLV-B). The sequence is that of Sodium-dependent phosphate transporter 1 (Slc20a1) from Mus musculus (Mouse).